We begin with the raw amino-acid sequence, 276 residues long: Halorhodopsin (276 aa).

The propeptide occupies Met1–Leu20. Gln21 carries the post-translational modification Pyrrolidone carboxylic acid. The next 7 helical transmembrane spans lie at Ser31 to Gly51, Leu61 to Ala81, Tyr109 to Thr129, Leu134 to Ile154, Trp162 to Gln182, Ile195 to Ala215, and Gly220 to Ala240. Position 241 is an N6-(retinylidene)lysine (Lys241).

This sequence belongs to the archaeal/bacterial/fungal opsin family. The covalent binding of retinal to the apoprotein, bacterioopsin, generates bacteriorhodopsin.

The protein localises to the membrane. Light-driven chloride pump. The sequence is that of Halorhodopsin (hop) from Haloarcula marismortui (strain ATCC 43049 / DSM 3752 / JCM 8966 / VKM B-1809) (Halobacterium marismortui).